The chain runs to 322 residues: MIQHLALDALQRHLAGSPLYAWATSLPAQIAARIEEGHGDLARWWSAVQRLPQVQAPTVELAGRFALHSERDAALQPQVKEALQGLIPWRKGPFDFFGVQVDTEWRSDWKWSRVSPHVDLRGKRILDVGCGNGYYQWRMLGAGAESVIGIDPNWLFLCQFLAAKRYLADLPAWHLPLALEDLPEKLEGFDTLFSMGVLYHRRSPIDHLLALKDCLKRGGELVLETLVVEGDASTVLVPEDRYAQMRNVWFLPSVAALELWLRRAGFADARCVDVSLTSVEEQRATEWMRFQSLPEFLDPQDRSRTVEGLPAPMRATLVARKP.

Carboxy-S-adenosyl-L-methionine contacts are provided by residues K91, W105, K110, G129, 179–180 (LE), M195, Y199, and R314.

The protein belongs to the class I-like SAM-binding methyltransferase superfamily. CmoB family. As to quaternary structure, homotetramer.

The enzyme catalyses carboxy-S-adenosyl-L-methionine + 5-hydroxyuridine(34) in tRNA = 5-carboxymethoxyuridine(34) in tRNA + S-adenosyl-L-homocysteine + H(+). In terms of biological role, catalyzes carboxymethyl transfer from carboxy-S-adenosyl-L-methionine (Cx-SAM) to 5-hydroxyuridine (ho5U) to form 5-carboxymethoxyuridine (cmo5U) at position 34 in tRNAs. The protein is tRNA U34 carboxymethyltransferase of Pseudomonas paraeruginosa (strain DSM 24068 / PA7) (Pseudomonas aeruginosa (strain PA7)).